A 296-amino-acid polypeptide reads, in one-letter code: MGFVKVVKNKAYFKRYQVKFRRRREGKTDYYARKRLVIQDKNKYNTPKYRMIVRVTNRDIICQIAYARIEGDMIVCAAYAHELPKYGVKVGLTNYAAAYCTGLLLARRLLNKFGLDKVYEGQVEVTGDEYNVESVDGEPGAFTCYLDAGLTRTTTGNKVFGALKGAVDGGLSIPHSTKRFPGYDSESKEFNPEVHRKHIFAQNIAEYMRLLMEEDEDAYKKQFSQYIKNGVAADQLEDIYKKAHAGIRENPVHEKKPKKEVKKKRWNRAKLSLEQKKDRVAQKKASFLRAQEKADS.

The interval 251–296 (PVHEKKPKKEVKKKRWNRAKLSLEQKKDRVAQKKASFLRAQEKADS) is disordered. The span at 255-268 (KKPKKEVKKKRWNR) shows a compositional bias: basic residues. The span at 271 to 281 (LSLEQKKDRVA) shows a compositional bias: basic and acidic residues.

It belongs to the universal ribosomal protein uL18 family. As to quaternary structure, component of the large ribosomal subunit (LSU). Part of a LSU subcomplex, the 5S RNP which is composed of the 5S RNA, RPL5 and RPL11.

The protein resides in the cytoplasm. It is found in the nucleus. It localises to the nucleolus. Component of the ribosome, a large ribonucleoprotein complex responsible for the synthesis of proteins in the cell. The small ribosomal subunit (SSU) binds messenger RNAs (mRNAs) and translates the encoded message by selecting cognate aminoacyl-transfer RNA (tRNA) molecules. The large subunit (LSU) contains the ribosomal catalytic site termed the peptidyl transferase center (PTC), which catalyzes the formation of peptide bonds, thereby polymerizing the amino acids delivered by tRNAs into a polypeptide chain. The nascent polypeptides leave the ribosome through a tunnel in the LSU and interact with protein factors that function in enzymatic processing, targeting, and the membrane insertion of nascent chains at the exit of the ribosomal tunnel. As part of the 5S RNP/5S ribonucleoprotein particle it is an essential component of the LSU, required for its formation and the maturation of rRNAs. It also couples ribosome biogenesis to p53/TP53 activation. As part of the 5S RNP it accumulates in the nucleoplasm and inhibits MDM2, when ribosome biogenesis is perturbed, mediating the stabilization and the activation of TP53. The sequence is that of Large ribosomal subunit protein uL18B (rpl5-b) from Xenopus laevis (African clawed frog).